A 177-amino-acid chain; its full sequence is MAGLWRAYQRLLGAHPWKVQIVTAGSLVGVGDVISQQLLERKGLKGHSIERTVKMMGIGFCFVGPVVGGWYKILDRIIPGSGKPVALKKMLLDQVAFAPCFLGCFLSIASALNGLSGEQIWGKLKRDYKDALITNYYIWPAVQVANFYFIPLYHRLAVVQFVAIIWNSYLSWKANKS.

4 helical membrane-spanning segments follow: residues 11–31 (LLGA…VGVG), 55–75 (MMGI…KILD), 95–115 (VAFA…LNGL), and 132–152 (LITN…FIPL).

It belongs to the peroxisomal membrane protein PXMP2/4 family.

Its subcellular location is the mitochondrion inner membrane. Functionally, involved in mitochondrial homeostasis, and control of oxidative phosphorylation and mitochondrial DNA (mtDNA) maintenance. Non-selective channel that modulates the membrane potential under normal conditions and oxidative stress. The chain is Mitochondrial inner membrane protein Mpv17 (mpv17) from Xenopus laevis (African clawed frog).